The following is a 235-amino-acid chain: Protein CIST1 (235 aa).

An N-terminal signal peptide occupies residues 1-31 (MASSQPPLPPPPPPLLLLALLLLLKVSDTSS). Low complexity-rich tracts occupy residues 28-61 (DTSS…SSPT) and 76-110 (STSH…SQPE). The tract at residues 28–159 (DTSSSVSTAT…TGPPSVSLAT (132 aa)) is disordered. The Extracellular portion of the chain corresponds to 32–184 (SVSTATSTAS…GVPRLHRNPG (153 aa)). Asparagine 45 carries an N-linked (GlcNAc...) asparagine glycan. Residues 114–136 (HPSSGSPSSEHTVTSPSLGSVSL) show a composition bias toward polar residues. The chain crosses the membrane as a helical span at residues 185–205 (VVVAVCLLVSALLIGGAIMAV). At 206-235 (RRCHNGVSEFQKLDEGLVSRRSSSAHHTLP) the chain is on the cytoplasmic side.

In terms of tissue distribution, highly expressed in large intestine, small intestine, rumen, and kidney tissues.

It localises to the membrane. The polypeptide is Protein CIST1 (CIST1) (Bos taurus (Bovine)).